The sequence spans 691 residues: Ribonucleoprotein PTB-binding 2 (691 aa).

The segment covering 1 to 30 has biased composition (gly residues); it reads MAAAAGDGGGEGGAGLGSAAGLGPGPGLRG. The interval 1–47 is disordered; it reads MAAAAGDGGGEGGAGLGSAAGLGPGPGLRGQGPSAEAHEGAPDPMPA. Alanine 2 bears the N-acetylalanine mark. RRM domains lie at 69–140, 142–220, and 231–309; these read RKIL…LQPT, ALLC…WMDV, and KCLC…FCAP. Disordered regions lie at residues 492-522 and 543-574; these read PNQHIAGQAGPGHSNTQEKQPATVGMAEGNF and GHHKQQQSQPKGTEISSGAASKNQTSLLGEPP. Residues 548–569 show a composition bias toward polar residues; it reads QQSQPKGTEISSGAASKNQTSL.

In terms of assembly, interacts with PTBP1 and RAVER1.

It localises to the nucleus. It is found in the cytoplasm. In terms of biological role, may bind single-stranded nucleic acids. The protein is Ribonucleoprotein PTB-binding 2 (RAVER2) of Homo sapiens (Human).